A 470-amino-acid chain; its full sequence is UDP-N-acetylmuramoylalanine--D-glutamate ligase (470 aa).

Residue 120–126 coordinates ATP; sequence GSNGKTT.

Belongs to the MurCDEF family.

The protein resides in the cytoplasm. The catalysed reaction is UDP-N-acetyl-alpha-D-muramoyl-L-alanine + D-glutamate + ATP = UDP-N-acetyl-alpha-D-muramoyl-L-alanyl-D-glutamate + ADP + phosphate + H(+). Its pathway is cell wall biogenesis; peptidoglycan biosynthesis. Cell wall formation. Catalyzes the addition of glutamate to the nucleotide precursor UDP-N-acetylmuramoyl-L-alanine (UMA). The protein is UDP-N-acetylmuramoylalanine--D-glutamate ligase of Nitrosomonas eutropha (strain DSM 101675 / C91 / Nm57).